The following is a 121-amino-acid chain: Putative iron-sulfur cluster insertion protein ErpA (121 aa).

Iron-sulfur cluster is bound by residues cysteine 49, cysteine 113, and cysteine 115.

It belongs to the HesB/IscA family. In terms of assembly, homodimer. The cofactor is iron-sulfur cluster.

Functionally, required for insertion of 4Fe-4S clusters. This Polaromonas sp. (strain JS666 / ATCC BAA-500) protein is Putative iron-sulfur cluster insertion protein ErpA.